We begin with the raw amino-acid sequence, 301 residues long: NAD kinase 2 (301 aa).

The active-site Proton acceptor is the D77. NAD(+) is bound by residues 77 to 78 (DG), R82, 151 to 152 (NE), R162, D181, and 192 to 197 (TAYAFS).

The protein belongs to the NAD kinase family. It depends on a divalent metal cation as a cofactor.

It localises to the cytoplasm. It catalyses the reaction NAD(+) + ATP = ADP + NADP(+) + H(+). In terms of biological role, involved in the regulation of the intracellular balance of NAD and NADP, and is a key enzyme in the biosynthesis of NADP. Catalyzes specifically the phosphorylation on 2'-hydroxyl of the adenosine moiety of NAD to yield NADP. The polypeptide is NAD kinase 2 (Streptomyces avermitilis (strain ATCC 31267 / DSM 46492 / JCM 5070 / NBRC 14893 / NCIMB 12804 / NRRL 8165 / MA-4680)).